Reading from the N-terminus, the 118-residue chain is Large ribosomal subunit protein bL19 (118 aa).

The protein belongs to the bacterial ribosomal protein bL19 family.

Its function is as follows. This protein is located at the 30S-50S ribosomal subunit interface and may play a role in the structure and function of the aminoacyl-tRNA binding site. The chain is Large ribosomal subunit protein bL19 from Frankia alni (strain DSM 45986 / CECT 9034 / ACN14a).